The following is an 89-amino-acid chain: Small ribosomal subunit protein uS15 (89 aa).

This sequence belongs to the universal ribosomal protein uS15 family. As to quaternary structure, part of the 30S ribosomal subunit. Forms a bridge to the 50S subunit in the 70S ribosome, contacting the 23S rRNA.

Its function is as follows. One of the primary rRNA binding proteins, it binds directly to 16S rRNA where it helps nucleate assembly of the platform of the 30S subunit by binding and bridging several RNA helices of the 16S rRNA. Forms an intersubunit bridge (bridge B4) with the 23S rRNA of the 50S subunit in the ribosome. This is Small ribosomal subunit protein uS15 from Chlorobium chlorochromatii (strain CaD3).